The chain runs to 457 residues: Phosphoglucosamine mutase (457 aa).

The active-site Phosphoserine intermediate is serine 103. Mg(2+) contacts are provided by serine 103, aspartate 245, aspartate 247, and aspartate 249. A Phosphoserine modification is found at serine 103.

This sequence belongs to the phosphohexose mutase family. Requires Mg(2+) as cofactor. In terms of processing, activated by phosphorylation.

The enzyme catalyses alpha-D-glucosamine 1-phosphate = D-glucosamine 6-phosphate. In terms of biological role, catalyzes the conversion of glucosamine-6-phosphate to glucosamine-1-phosphate. This Syntrophotalea carbinolica (strain DSM 2380 / NBRC 103641 / GraBd1) (Pelobacter carbinolicus) protein is Phosphoglucosamine mutase.